We begin with the raw amino-acid sequence, 265 residues long: Thiazole synthase (265 aa).

The active-site Schiff-base intermediate with DXP is the K103. 1-deoxy-D-xylulose 5-phosphate-binding positions include G164, 190–191 (AG), and 212–213 (NT).

This sequence belongs to the ThiG family. Homotetramer. Forms heterodimers with either ThiH or ThiS.

The protein resides in the cytoplasm. The enzyme catalyses [ThiS sulfur-carrier protein]-C-terminal-Gly-aminoethanethioate + 2-iminoacetate + 1-deoxy-D-xylulose 5-phosphate = [ThiS sulfur-carrier protein]-C-terminal Gly-Gly + 2-[(2R,5Z)-2-carboxy-4-methylthiazol-5(2H)-ylidene]ethyl phosphate + 2 H2O + H(+). The protein operates within cofactor biosynthesis; thiamine diphosphate biosynthesis. In terms of biological role, catalyzes the rearrangement of 1-deoxy-D-xylulose 5-phosphate (DXP) to produce the thiazole phosphate moiety of thiamine. Sulfur is provided by the thiocarboxylate moiety of the carrier protein ThiS. In vitro, sulfur can be provided by H(2)S. The chain is Thiazole synthase from Bordetella pertussis (strain Tohama I / ATCC BAA-589 / NCTC 13251).